The chain runs to 397 residues: 4-hydroxybenzoate polyprenyltransferase, mitochondrial (397 aa).

The N-terminal 14 residues, 1 to 14 (MFAVRHLLKSRKHF), are a transit peptide targeting the mitochondrion. Transmembrane regions (helical) follow at residues 96-116 (IGTY…ADAG), 121-141 (LTML…GCTI), 169-189 (FDAI…LVQL), 190-210 (NWQS…YPLM), 213-233 (VTYW…LLGW), 242-262 (LAAC…YDTI), 289-309 (VWLS…GWAC), 313-333 (LPYY…IYSL), and 345-365 (FLSN…GTLL).

Belongs to the UbiA prenyltransferase family. Mg(2+) serves as cofactor.

The protein localises to the mitochondrion inner membrane. The enzyme catalyses an all-trans-polyprenyl diphosphate + 4-hydroxybenzoate = a 4-hydroxy-3-(all-trans-polyprenyl)benzoate + diphosphate. It participates in cofactor biosynthesis; ubiquinone biosynthesis. Functionally, catalyzes the prenylation of para-hydroxybenzoate (PHB) with an all-trans polyprenyl group. Mediates the second step in the final reaction sequence of coenzyme Q (CoQ) biosynthesis, which is the condensation of the polyisoprenoid side chain with PHB, generating the first membrane-bound Q intermediate. This Drosophila pseudoobscura pseudoobscura (Fruit fly) protein is 4-hydroxybenzoate polyprenyltransferase, mitochondrial.